The primary structure comprises 329 residues: Coiled-coil domain-containing protein 54 (329 aa).

A coiled-coil region spans residues 86–149; that stretch reads NIVSSISNIQ…VTELESQNSY (64 aa). Residues 178-191 are compositionally biased toward polar residues; that stretch reads TPKGTATSPDTVIS. The segment at 178–214 is disordered; sequence TPKGTATSPDTVISSAEPERVSSYPEPTGELKKKTTS. Position 182 is a phosphothreonine (threonine 182).

The chain is Coiled-coil domain-containing protein 54 (Ccdc54) from Mus musculus (Mouse).